The primary structure comprises 193 residues: Sarcoplasmic calcium-binding protein, alpha chain (193 aa).

IgE-binding epitope stretches follow at residues 10–36 and 49–72; these read KYVV…LAVR and DAYA…ADFN. 3 EF-hand domains span residues 16 to 40, 57 to 92, and 101 to 136; these read MYDI…NTLI, IMRN…HCQG, and AFKV…RSAF. The Ca(2+) site is built by Asp-18, Asp-20, Asn-22, Asp-29, Asp-70, Asn-72, Asp-74, Glu-76, Glu-81, Asp-114, Asn-116, Asp-118, Lys-120, and Glu-125. The interval 130–147 is igE-binding epitope; the sequence is CITRSAFAEVKEIDDAYN.

SCPs from crayfish, lobster, and shrimp are polymorphic dimers; three isotypes (alpha-alpha, alpha-beta, and beta-beta) have been identified. Expressed in tail muscle (at protein level).

In terms of biological role, like parvalbumins, SCPs seem to be more abundant in fast contracting muscles, but no functional relationship can be established from this distribution. The chain is Sarcoplasmic calcium-binding protein, alpha chain from Penaeus vannamei (Whiteleg shrimp).